Consider the following 457-residue polypeptide: Bifunctional protein GlmU (457 aa).

The pyrophosphorylase stretch occupies residues methionine 1 to leucine 230. Residues leucine 12–glycine 15, lysine 26, glutamine 78, glycine 83–threonine 84, tyrosine 105–aspartate 107, glycine 140, glutamate 155, asparagine 170, and asparagine 228 each bind UDP-N-acetyl-alpha-D-glucosamine. A Mg(2+)-binding site is contributed by aspartate 107. Asparagine 228 contacts Mg(2+). The segment at tryptophan 231 to glutamine 251 is linker. The tract at residues glycine 252–threonine 457 is N-acetyltransferase. The UDP-N-acetyl-alpha-D-glucosamine site is built by arginine 334 and lysine 352. Histidine 364 acts as the Proton acceptor in catalysis. UDP-N-acetyl-alpha-D-glucosamine is bound by residues tyrosine 367 and asparagine 378. Residues alanine 381, asparagine 387–tyrosine 388, serine 406, alanine 424, and arginine 441 each bind acetyl-CoA.

In the N-terminal section; belongs to the N-acetylglucosamine-1-phosphate uridyltransferase family. This sequence in the C-terminal section; belongs to the transferase hexapeptide repeat family. As to quaternary structure, homotrimer. Mg(2+) is required as a cofactor.

Its subcellular location is the cytoplasm. The enzyme catalyses alpha-D-glucosamine 1-phosphate + acetyl-CoA = N-acetyl-alpha-D-glucosamine 1-phosphate + CoA + H(+). The catalysed reaction is N-acetyl-alpha-D-glucosamine 1-phosphate + UTP + H(+) = UDP-N-acetyl-alpha-D-glucosamine + diphosphate. The protein operates within nucleotide-sugar biosynthesis; UDP-N-acetyl-alpha-D-glucosamine biosynthesis; N-acetyl-alpha-D-glucosamine 1-phosphate from alpha-D-glucosamine 6-phosphate (route II): step 2/2. It functions in the pathway nucleotide-sugar biosynthesis; UDP-N-acetyl-alpha-D-glucosamine biosynthesis; UDP-N-acetyl-alpha-D-glucosamine from N-acetyl-alpha-D-glucosamine 1-phosphate: step 1/1. It participates in bacterial outer membrane biogenesis; LPS lipid A biosynthesis. Functionally, catalyzes the last two sequential reactions in the de novo biosynthetic pathway for UDP-N-acetylglucosamine (UDP-GlcNAc). The C-terminal domain catalyzes the transfer of acetyl group from acetyl coenzyme A to glucosamine-1-phosphate (GlcN-1-P) to produce N-acetylglucosamine-1-phosphate (GlcNAc-1-P), which is converted into UDP-GlcNAc by the transfer of uridine 5-monophosphate (from uridine 5-triphosphate), a reaction catalyzed by the N-terminal domain. In Xylella fastidiosa (strain M23), this protein is Bifunctional protein GlmU.